Reading from the N-terminus, the 344-residue chain is MEEKLKQLEQEALEQVEAASSLKVVNDIRVQYLGKKGPITEVLRGMGKLSAEERPKMGALANEVRERIANAIADKNEKLEEEEMKQKLAGQTIDVTLPGNPVAVGGRHPLTVVIEEIEDLFIGMGYTVEEGPEVETDYYNFESLNLPKEHPARDMQDSFYITEETLMRTQTSPVQTRTMEKHEGKGPVKIICPGKVYRRDNDDATHSHQFMQIEGLVVDKNISMSDLKGTLELVAKKMFGQDREIRLRPSFFPFTEPSVEVDVTCFKCGGNGCSVCKGTGWIEILGAGMVHPNVLKMAGFDPKEYQGFAFGMGVERIAMLKYGIDDIRHFYTNDVRFISQFKQA.

Mg(2+) is bound at residue Glu256.

It belongs to the class-II aminoacyl-tRNA synthetase family. Phe-tRNA synthetase alpha subunit type 1 subfamily. Tetramer of two alpha and two beta subunits. It depends on Mg(2+) as a cofactor.

It is found in the cytoplasm. It catalyses the reaction tRNA(Phe) + L-phenylalanine + ATP = L-phenylalanyl-tRNA(Phe) + AMP + diphosphate + H(+). The protein is Phenylalanine--tRNA ligase alpha subunit (pheS) of Bacillus subtilis (strain 168).